A 197-amino-acid chain; its full sequence is Transposon Tn552 resolvase (197 aa).

One can recognise a Resolvase/invertase-type recombinase catalytic domain in the interval 1 to 136 (MKIGYARVST…AGRIAARARG (136 aa)). Ser9 acts as the O-(5'-phospho-DNA)-serine intermediate in catalysis. Positions 163 to 182 (IKTIAEQWQVSRTTIYRYLN) form a DNA-binding region, H-T-H motif.

This sequence belongs to the site-specific recombinase resolvase family.

Its function is as follows. Resolvase catalyzes the resolution (a site-specific recombination) of the cointegrated replicon to yield the final transposition products. In Staphylococcus aureus, this protein is Transposon Tn552 resolvase (tnpR).